We begin with the raw amino-acid sequence, 139 residues long: Large ribosomal subunit protein uL24 (139 aa).

Residues 1-25 (MKRNTNVSSSRRKSRKAHFTASSGE) are disordered.

Belongs to the universal ribosomal protein uL24 family.

This Dictyostelium discoideum (Social amoeba) protein is Large ribosomal subunit protein uL24 (rpl26).